A 197-amino-acid polypeptide reads, in one-letter code: 3-isopropylmalate dehydratase small subunit (197 aa).

The protein belongs to the LeuD family. LeuD type 1 subfamily. As to quaternary structure, heterodimer of LeuC and LeuD.

It carries out the reaction (2R,3S)-3-isopropylmalate = (2S)-2-isopropylmalate. It functions in the pathway amino-acid biosynthesis; L-leucine biosynthesis; L-leucine from 3-methyl-2-oxobutanoate: step 2/4. Catalyzes the isomerization between 2-isopropylmalate and 3-isopropylmalate, via the formation of 2-isopropylmaleate. This Geobacillus kaustophilus (strain HTA426) protein is 3-isopropylmalate dehydratase small subunit.